A 728-amino-acid chain; its full sequence is 1,4-alpha-glucan branching enzyme GlgB (728 aa).

Asp405 (nucleophile) is an active-site residue. The Proton donor role is filled by Glu458.

The protein belongs to the glycosyl hydrolase 13 family. GlgB subfamily. Monomer.

The enzyme catalyses Transfers a segment of a (1-&gt;4)-alpha-D-glucan chain to a primary hydroxy group in a similar glucan chain.. It participates in glycan biosynthesis; glycogen biosynthesis. Functionally, catalyzes the formation of the alpha-1,6-glucosidic linkages in glycogen by scission of a 1,4-alpha-linked oligosaccharide from growing alpha-1,4-glucan chains and the subsequent attachment of the oligosaccharide to the alpha-1,6 position. In Shigella dysenteriae serotype 1 (strain Sd197), this protein is 1,4-alpha-glucan branching enzyme GlgB.